The chain runs to 29 residues: ShK homolog Ask132958 (29 aa).

Residues 1–29 (CENTISGCSRADCLLTHRKQGCQKTCGLC) enclose the ShKT domain. 3 disulfides stabilise this stretch: cysteine 1–cysteine 29, cysteine 8–cysteine 22, and cysteine 13–cysteine 26.

The protein belongs to the sea anemone type 1 potassium channel toxin family. Type 1a subfamily.

Its subcellular location is the secreted. It is found in the nematocyst. Functionally, this peptide is similar to the potassium channel toxin ShK, but does not show activity on potassium channels. It appears that Lys-19, which is expected to occupy the pore of the channel, is not sufficiently accessible for binding, and therefore that this peptide must have a distinct functional role that does not involve potassium channels. It is noteworthy that this peptide is much more stable in the presence of trypsin, chymotrypsin and pepsin than the toxin ShK. The sequence is that of ShK homolog Ask132958 from Anemonia sulcata (Mediterranean snakelocks sea anemone).